Reading from the N-terminus, the 269-residue chain is 1-(5-phosphoribosyl)-5-[(5-phosphoribosylamino)methylideneamino] imidazole-4-carboxamide isomerase (269 aa).

The active-site Proton acceptor is the Asp10. The active-site Proton donor is the Asp132.

It belongs to the HisA/HisF family.

It localises to the cytoplasm. It carries out the reaction 1-(5-phospho-beta-D-ribosyl)-5-[(5-phospho-beta-D-ribosylamino)methylideneamino]imidazole-4-carboxamide = 5-[(5-phospho-1-deoxy-D-ribulos-1-ylimino)methylamino]-1-(5-phospho-beta-D-ribosyl)imidazole-4-carboxamide. It participates in amino-acid biosynthesis; L-histidine biosynthesis; L-histidine from 5-phospho-alpha-D-ribose 1-diphosphate: step 4/9. This Xylella fastidiosa (strain Temecula1 / ATCC 700964) protein is 1-(5-phosphoribosyl)-5-[(5-phosphoribosylamino)methylideneamino] imidazole-4-carboxamide isomerase.